A 285-amino-acid chain; its full sequence is MIAASGPTPLVATTQRTLAGTAQWSGVGLHSGQWVALTLQPAAANTGRQFVRLDLEGQPVIPARIEAVKSTQLATELVANGASVRTVEHLLAALAIAGIDNVTIQITGPEVPVLDGSAQPWLEGIQRVGVVPQEAPRPAVILKEPVTIYEGEAFVSAIPAPELRLTYGIDFPYRAIGRQWCSFTPSELATEVAPARTFGFAEQVDYLRSQGLIQGGSLENALVCSASGWVNPPLRFADEPVRHKLLDLWGDLALLGTPPIAHYVAYRASHHLHTQLARAIAQQRV.

Zn(2+) is bound by residues His-89, His-243, and Asp-247. His-270 serves as the catalytic Proton donor.

This sequence belongs to the LpxC family. Zn(2+) serves as cofactor.

The enzyme catalyses a UDP-3-O-[(3R)-3-hydroxyacyl]-N-acetyl-alpha-D-glucosamine + H2O = a UDP-3-O-[(3R)-3-hydroxyacyl]-alpha-D-glucosamine + acetate. Its pathway is glycolipid biosynthesis; lipid IV(A) biosynthesis; lipid IV(A) from (3R)-3-hydroxytetradecanoyl-[acyl-carrier-protein] and UDP-N-acetyl-alpha-D-glucosamine: step 2/6. Functionally, catalyzes the hydrolysis of UDP-3-O-myristoyl-N-acetylglucosamine to form UDP-3-O-myristoylglucosamine and acetate, the committed step in lipid A biosynthesis. The chain is UDP-3-O-acyl-N-acetylglucosamine deacetylase from Thermosynechococcus vestitus (strain NIES-2133 / IAM M-273 / BP-1).